Reading from the N-terminus, the 226-residue chain is Peroxiredoxin-like 2C (226 aa).

The protein belongs to the peroxiredoxin-like PRXL2 family. PRXL2C subfamily. As to expression, expressed in gastric tissues.

May positively regulate ERK1/2 signaling and AKT1 activation leading to HIF1A up-regulation with an increased expression of glycolysis genes and enhanced glycolysis. The protein is Peroxiredoxin-like 2C of Homo sapiens (Human).